A 500-amino-acid chain; its full sequence is Lysine--tRNA ligase (500 aa).

Residues E410 and E417 each contribute to the Mg(2+) site.

This sequence belongs to the class-II aminoacyl-tRNA synthetase family. As to quaternary structure, homodimer. Requires Mg(2+) as cofactor.

It is found in the cytoplasm. It catalyses the reaction tRNA(Lys) + L-lysine + ATP = L-lysyl-tRNA(Lys) + AMP + diphosphate. This is Lysine--tRNA ligase from Pseudomonas syringae pv. syringae (strain B728a).